The sequence spans 244 residues: Glutathione S-transferase theta-2 (244 aa).

The GST N-terminal domain occupies G2–D82. Residues H40 to M41, K53 to V54, E66 to S67, and D104 to R107 each bind glutathione. The 143-residue stretch at D88–P230 folds into the GST C-terminal domain.

Belongs to the GST superfamily. Theta family. In terms of assembly, homodimer. In liver, highest expression found in central vein limiting plate hepatocytes. Also expressed in interlobular bile duct epithelial cells. In lung, expressed in club cells and ciliated cells of the bronchiolar epithelium and in type II alveolar cells of the lung parenchyma.

The protein resides in the cytoplasm. It localises to the cytosol. It is found in the nucleus. It carries out the reaction RX + glutathione = an S-substituted glutathione + a halide anion + H(+). Its function is as follows. Conjugation of reduced glutathione to a wide number of exogenous and endogenous hydrophobic electrophiles. This Mus musculus (Mouse) protein is Glutathione S-transferase theta-2.